The following is a 49-amino-acid chain: Light-harvesting protein B-880 alpha chain (49 aa).

At 1 to 12 the chain is on the cytoplasmic side; it reads MYKLWLLFDPRR. Residues 13-33 traverse the membrane as a helical segment; that stretch reads TLVALSAFLFVLGLIIHFISL. His-29 lines the a bacteriochlorophyll pocket. Topologically, residues 34–49 are periplasmic; sequence STDRFNWLEGKPAVRA.

The protein belongs to the antenna complex alpha subunit family. The core complex is formed by different alpha and beta chains, binding bacteriochlorophyll molecules, and arranged most probably in tetrameric structures disposed around the reaction center. The non-pigmented gamma chains may constitute additional components.

The protein resides in the cell inner membrane. In terms of biological role, antenna complexes are light-harvesting systems, which transfer the excitation energy to the reaction centers. In Rhodoblastus acidophilus (Rhodopseudomonas acidophila), this protein is Light-harvesting protein B-880 alpha chain.